The following is a 161-amino-acid chain: MKYDTSELCDIYQEDVNVVEPLFSNFGGRSSFGGQIITVKCFEDNGLLYDLLEQNGRGRVLLVDGGGSVRRALVDAELARLATQNEWEGLVIYGAVRQVDDLEELDIGIQAIAAIPVGAAGEGIGESDVRVNFGGVTFFSGDHLYADNTGIILSEDPLDIE.

This sequence belongs to the RraA family. In terms of assembly, homotrimer. Binds to both RNA-binding sites in the C-terminal region of Rne and to RhlB.

Its subcellular location is the cytoplasm. Functionally, globally modulates RNA abundance by binding to RNase E (Rne) and regulating its endonucleolytic activity. Can modulate Rne action in a substrate-dependent manner by altering the composition of the degradosome. Modulates RNA-binding and helicase activities of the degradosome. The polypeptide is Regulator of ribonuclease activity A (Salmonella agona (strain SL483)).